Reading from the N-terminus, the 367-residue chain is Isoflavone 4'-O-methyltransferase (367 aa).

Residues 209 to 212, D233, 233 to 234, 253 to 254, and K267 contribute to the S-adenosyl-L-methionine site; these read VGGG, DQ, and DM. The active-site Proton acceptor is the H271.

This sequence belongs to the class I-like SAM-binding methyltransferase superfamily. Cation-independent O-methyltransferase family. COMT subfamily.

It carries out the reaction a 4'-hydroxyisoflavone + S-adenosyl-L-methionine = a 4'-methoxyisoflavone + S-adenosyl-L-homocysteine + H(+). It catalyses the reaction (2R,3S)-2,4',7-trihydroxyisoflavanone + S-adenosyl-L-methionine = (2R,3S)-2,7-dihydroxy-4'-methoxyisoflavanone + S-adenosyl-L-homocysteine + H(+). Functionally, 2-hydroxyisoflavanone 4'-O-methyltransferase involved in the biosynthesis of formononetin. Can use 2,7,4'-trihydroxyisoflavanone, (+)-6a-hydroxymaackiain or medicarpin as substrate, but not daidzein or (-)-6a-hydroxymaackiain. The chain is Isoflavone 4'-O-methyltransferase (HI4'OMT) from Glycyrrhiza echinata (Licorice).